Reading from the N-terminus, the 283-residue chain is Glutamate racemase (283 aa).

Substrate contacts are provided by residues 28-29 (DS) and 60-61 (YG). The active-site Proton donor/acceptor is the Cys-92. 93 to 94 (NT) provides a ligand contact to substrate. Cys-204 acts as the Proton donor/acceptor in catalysis. Substrate is bound at residue 205 to 206 (TH).

This sequence belongs to the aspartate/glutamate racemases family.

The catalysed reaction is L-glutamate = D-glutamate. Its pathway is cell wall biogenesis; peptidoglycan biosynthesis. In terms of biological role, provides the (R)-glutamate required for cell wall biosynthesis. In Salmonella enteritidis PT4 (strain P125109), this protein is Glutamate racemase.